Here is a 47-residue protein sequence, read N- to C-terminus: Conotoxin reg3.11 (47 aa).

The propeptide occupies 1 to 31 (DQPVERHAENKRHLIPAVMRAMTMNADRRVQ). Disulfide bonds link C32–C44, C33–C42, and C38–C45. Residues 46–47 (YH) constitute a propeptide that is removed on maturation.

The protein belongs to the conotoxin M superfamily. Expressed by the venom duct.

It localises to the secreted. This chain is Conotoxin reg3.11, found in Conus regius (Crown cone).